Reading from the N-terminus, the 475-residue chain is Zinc finger protein 296 (475 aa).

A disordered region spans residues methionine 1 to alanine 78. Residue lysine 35 forms a Glycyl lysine isopeptide (Lys-Gly) (interchain with G-Cter in SUMO2) linkage. 3 C2H2-type zinc fingers span residues leucine 157–histidine 180, proline 231–histidine 253, and tyrosine 259–histidine 281. A disordered region spans residues asparagine 275–glycine 385. Composition is skewed to low complexity over residues serine 295 to proline 313 and glycine 326 to alanine 338. Residues proline 339–threonine 351 are compositionally biased toward gly residues. Residues alanine 354–glutamine 367 are compositionally biased toward polar residues. C2H2-type zinc fingers lie at residues glycine 386 to histidine 408, tyrosine 414 to histidine 436, and phenylalanine 445 to histidine 468.

This sequence belongs to the krueppel C2H2-type zinc-finger protein family. In terms of assembly, interacts with KLF4.

It localises to the nucleus. In terms of biological role, may be a transcriptional corepressor with KLF4. This is Zinc finger protein 296 (ZNF296) from Homo sapiens (Human).